A 79-amino-acid polypeptide reads, in one-letter code: Probable [Fe-S]-dependent transcriptional repressor (79 aa).

Iron-sulfur cluster is bound by residues C56, C61, C64, and C71.

This sequence belongs to the FeoC family.

Its function is as follows. May function as a transcriptional regulator that controls feoABC expression. The polypeptide is Probable [Fe-S]-dependent transcriptional repressor (Klebsiella pneumoniae subsp. pneumoniae (strain ATCC 700721 / MGH 78578)).